The following is a 432-amino-acid chain: Enolase (432 aa).

Gln163 serves as a coordination point for (2R)-2-phosphoglycerate. Glu205 serves as the catalytic Proton donor. Mg(2+) contacts are provided by Asp242, Glu287, and Asp314. Positions 339, 368, 369, and 390 each coordinate (2R)-2-phosphoglycerate. Lys339 (proton acceptor) is an active-site residue.

This sequence belongs to the enolase family. The cofactor is Mg(2+).

The protein localises to the cytoplasm. The protein resides in the secreted. Its subcellular location is the cell surface. The catalysed reaction is (2R)-2-phosphoglycerate = phosphoenolpyruvate + H2O. It functions in the pathway carbohydrate degradation; glycolysis; pyruvate from D-glyceraldehyde 3-phosphate: step 4/5. In terms of biological role, catalyzes the reversible conversion of 2-phosphoglycerate (2-PG) into phosphoenolpyruvate (PEP). It is essential for the degradation of carbohydrates via glycolysis. The chain is Enolase from Myxococcus xanthus (strain DK1622).